The chain runs to 123 residues: Ribosome-binding factor A (123 aa).

This sequence belongs to the RbfA family. Monomer. Binds 30S ribosomal subunits, but not 50S ribosomal subunits or 70S ribosomes.

It is found in the cytoplasm. One of several proteins that assist in the late maturation steps of the functional core of the 30S ribosomal subunit. Associates with free 30S ribosomal subunits (but not with 30S subunits that are part of 70S ribosomes or polysomes). Required for efficient processing of 16S rRNA. May interact with the 5'-terminal helix region of 16S rRNA. The polypeptide is Ribosome-binding factor A (Prochlorococcus marinus (strain NATL1A)).